A 183-amino-acid polypeptide reads, in one-letter code: Putative ribosomal N-acetyltransferase YdaF (183 aa).

One can recognise an N-acetyltransferase domain in the interval 10 to 176; sequence ITIRLLEPKD…HDLVYYSLLK (167 aa).

The protein belongs to the acetyltransferase family. In terms of assembly, homohexamer, and homodimer.

Its function is as follows. Putative N-acetyltransferase. May act on ribosomal proteins (Potential). In Bacillus subtilis (strain 168), this protein is Putative ribosomal N-acetyltransferase YdaF (ydaF).